We begin with the raw amino-acid sequence, 60 residues long: MKFSVLVFILGLVLLLALSSATEMEENARACGSFMWKCSERLPCCQEYVCSPQWKWCQNP.

The N-terminal stretch at 1 to 21 (MKFSVLVFILGLVLLLALSSA) is a signal peptide. A propeptide spanning residues 22–29 (TEMEENAR) is cleaved from the precursor. 3 disulfides stabilise this stretch: C31–C45, C38–C50, and C44–C57.

It belongs to the neurotoxin 10 (Hwtx-1) family. 63 (VsTx1) subfamily. As to expression, expressed by the venom gland.

Its subcellular location is the secreted. In terms of biological role, inhibits sodium channels Nav1.7/SCN9A and potassium channels Kv11.1/KCNH2. Also binds the voltage-sensor domain of the potassium channel KvAP (from the archaeon Aeropyrum pernix) with very slow apparent binding kinetics and affects channel gating. Reaches its target by dynamically partitioning into anionic or zwitterionic headgroup lipid membranes. May bind to the open state of KvAP. The polypeptide is U1-theraphotoxin-Agm3a (Acanthoscurria gomesiana (Tarantula spider)).